The chain runs to 474 residues: Amidophosphoribosyltransferase (474 aa).

A propeptide spanning residues 1–10 (MLGESEVRDK) is cleaved from the precursor. C11 functions as the Nucleophile in the catalytic mechanism. In terms of domain architecture, Glutamine amidotransferase type-2 spans 11–234 (CGIVGIYSQD…PGEILHLNRG (224 aa)). C250 lines the [4Fe-4S] cluster pocket. Residues S297, D359, and D360 each coordinate Mg(2+). [4Fe-4S] cluster-binding residues include C396, C447, and C450.

In the C-terminal section; belongs to the purine/pyrimidine phosphoribosyltransferase family. Requires Mg(2+) as cofactor. [4Fe-4S] cluster is required as a cofactor.

It carries out the reaction 5-phospho-beta-D-ribosylamine + L-glutamate + diphosphate = 5-phospho-alpha-D-ribose 1-diphosphate + L-glutamine + H2O. It functions in the pathway purine metabolism; IMP biosynthesis via de novo pathway; N(1)-(5-phospho-D-ribosyl)glycinamide from 5-phospho-alpha-D-ribose 1-diphosphate: step 1/2. Functionally, catalyzes the formation of phosphoribosylamine from phosphoribosylpyrophosphate (PRPP) and glutamine. The chain is Amidophosphoribosyltransferase from Methanothermobacter thermautotrophicus (strain ATCC 29096 / DSM 1053 / JCM 10044 / NBRC 100330 / Delta H) (Methanobacterium thermoautotrophicum).